The following is a 61-amino-acid chain: Small ribosomal subunit protein uS14 (61 aa).

4 residues coordinate Zn(2+): Cys-24, Cys-27, Cys-40, and Cys-43.

It belongs to the universal ribosomal protein uS14 family. Zinc-binding uS14 subfamily. As to quaternary structure, part of the 30S ribosomal subunit. Contacts proteins S3 and S10. It depends on Zn(2+) as a cofactor.

Binds 16S rRNA, required for the assembly of 30S particles and may also be responsible for determining the conformation of the 16S rRNA at the A site. The protein is Small ribosomal subunit protein uS14 of Caldanaerobacter subterraneus subsp. tengcongensis (strain DSM 15242 / JCM 11007 / NBRC 100824 / MB4) (Thermoanaerobacter tengcongensis).